Here is a 310-residue protein sequence, read N- to C-terminus: Homoserine O-acetyltransferase (310 aa).

The active-site Acyl-thioester intermediate is cysteine 142. Lysine 163 and serine 192 together coordinate substrate. Residue histidine 235 is the Proton acceptor of the active site. Residue glutamate 237 is part of the active site. Substrate is bound at residue arginine 249.

Belongs to the MetA family.

Its subcellular location is the cytoplasm. It carries out the reaction L-homoserine + acetyl-CoA = O-acetyl-L-homoserine + CoA. It functions in the pathway amino-acid biosynthesis; L-methionine biosynthesis via de novo pathway; O-acetyl-L-homoserine from L-homoserine: step 1/1. Transfers an acetyl group from acetyl-CoA to L-homoserine, forming acetyl-L-homoserine. The protein is Homoserine O-acetyltransferase of Lachnospira eligens (strain ATCC 27750 / DSM 3376 / VPI C15-48 / C15-B4) (Eubacterium eligens).